Here is a 784-residue protein sequence, read N- to C-terminus: Alpha-catulin (784 aa).

Residues 35 to 247 form a vinculin/alpha-catenin homology 1 (VH1) region region; sequence IKTKSIEQTL…LLLTASKTYL (213 aa). Residues 387 to 414 are a coiled coil; the sequence is ASGLEVTVERLNRRLKDLSKQLQIVAME. The interval 552–696 is vinculin/alpha-catenin homology 2 (VH2) region; sequence PRPGKHGTTQ…MVKSPTVGKT (145 aa). A disordered region spans residues 737–784; the sequence is GSVNGRTGADGERTSRESTVWRRTPSIRRAAPPTSSHLSANNSSSIHI. Basic and acidic residues predominate over residues 745–756; the sequence is ADGERTSRESTV. A compositionally biased stretch (low complexity) spans 771–784; the sequence is SSHLSANNSSSIHI.

This sequence belongs to the vinculin/alpha-catenin family. In terms of assembly, interacts with slo-1 (via C-terminus); the interaction is required for localization of slo-1 to dense bodies in body wall muscle cells. Interacts (via N-terminus) with dystrophin complex member dyb-1 (via C-terminus); the interaction is required for localization of the dystrophin complex and ctn-1 near dense bodies in muscle cells. In terms of tissue distribution, expressed in body wall muscles, vulval muscles, stomatointestinal cells and pharyngeal muscle cells. Expressed in enteric muscles, nerve ring neurons and in the ventral nerve cord.

The protein localises to the cytoplasm. Functionally, required for slo-1 potassium ion channel clustering at presynaptic terminals and in egg-laying muscles; clustering of slo-1 mediates the intoxicating and sedatory effects of ethanol on worms. Required for slo-1 localization to dense bodies in body wall muscle cells. Maintains the localization of the dystrophin complex near muscle cell dense bodies via its interaction with complex member dyb-1 which is required for slo-1 localization in muscle while slo-1 localization in neurons is independent of the dystrophin complex. In Caenorhabditis elegans, this protein is Alpha-catulin.